Here is an 858-residue protein sequence, read N- to C-terminus: Alanine--tRNA ligase (858 aa).

Residues H550, H554, C652, and H656 each coordinate Zn(2+).

This sequence belongs to the class-II aminoacyl-tRNA synthetase family. It depends on Zn(2+) as a cofactor.

Its subcellular location is the cytoplasm. The enzyme catalyses tRNA(Ala) + L-alanine + ATP = L-alanyl-tRNA(Ala) + AMP + diphosphate. Functionally, catalyzes the attachment of alanine to tRNA(Ala) in a two-step reaction: alanine is first activated by ATP to form Ala-AMP and then transferred to the acceptor end of tRNA(Ala). Also edits incorrectly charged Ser-tRNA(Ala) and Gly-tRNA(Ala) via its editing domain. This Pseudothermotoga lettingae (strain ATCC BAA-301 / DSM 14385 / NBRC 107922 / TMO) (Thermotoga lettingae) protein is Alanine--tRNA ligase.